The primary structure comprises 265 residues: Cell division protein DivIB (265 aa).

Residues 1 to 30 (MKNSKVIKLQDRVPKLKNQQKKKKKNVNHR) are Cytoplasmic-facing. The helical transmembrane segment at 31–51 (LILYISILFLLVLFLIYFRSP) threads the bilayer. At 52–265 (LSNIKKISVF…NRMIVFNTLS (214 aa)) the chain is on the extracellular side. The POTRA domain occupies 53–121 (SNIKKISVFG…NKIDVHIEEY (69 aa)).

It belongs to the FtsQ/DivIB family. DivIB subfamily.

The protein localises to the cell membrane. Functionally, cell division protein that may be involved in stabilizing or promoting the assembly of the division complex. The polypeptide is Cell division protein DivIB (Bacillus anthracis).